A 506-amino-acid polypeptide reads, in one-letter code: Cysteine--tRNA ligase (506 aa).

Cysteine 43 lines the Zn(2+) pocket. A 'HIGH' region motif is present at residues 45–55 (VTVYDLCHLGH). Zn(2+) is bound by residues cysteine 237, histidine 262, and glutamate 266. Positions 294 to 298 (KMSKS) match the 'KMSKS' region motif. Lysine 297 lines the ATP pocket.

Belongs to the class-I aminoacyl-tRNA synthetase family. In terms of assembly, monomer. Zn(2+) serves as cofactor.

The protein localises to the cytoplasm. The enzyme catalyses tRNA(Cys) + L-cysteine + ATP = L-cysteinyl-tRNA(Cys) + AMP + diphosphate. In Synechococcus sp. (strain JA-3-3Ab) (Cyanobacteria bacterium Yellowstone A-Prime), this protein is Cysteine--tRNA ligase.